Here is a 624-residue protein sequence, read N- to C-terminus: DNA mismatch repair protein MutL (624 aa).

Positions 336–357 are disordered; it reads GEGFHETSDSFSSRSSQHSDAR. The span at 344-353 shows a compositional bias: low complexity; the sequence is DSFSSRSSQH.

The protein belongs to the DNA mismatch repair MutL/HexB family.

In terms of biological role, this protein is involved in the repair of mismatches in DNA. It is required for dam-dependent methyl-directed DNA mismatch repair. May act as a 'molecular matchmaker', a protein that promotes the formation of a stable complex between two or more DNA-binding proteins in an ATP-dependent manner without itself being part of a final effector complex. The chain is DNA mismatch repair protein MutL from Chlorobium phaeobacteroides (strain BS1).